The sequence spans 329 residues: uncharacterized protein (329 aa).

The protein to type I restriction system adenine methylases.

This is an uncharacterized protein from Bacillus subtilis (strain 168).